The chain runs to 98 residues: Prolactin-releasing peptide (98 aa).

Residues 1–22 (MKAVGAWLLCLLLLGLALQGAA) form the signal peptide. At Phe53 the chain carries Phenylalanine amide. Residues 58-98 (AAPGDGPRPGPRRELACIPLEGGAEPSRALLGRLTAQLVQE) constitute a propeptide that is removed on maturation.

More abundantly expressed in the brainstem than the hypothalamus.

It is found in the secreted. Its function is as follows. Stimulates prolactin (PRL) release and regulates the expression of prolactin through its receptor GPR10. May stimulate lactotrophs directly to secrete PRL. The protein is Prolactin-releasing peptide (PRLH) of Ovis aries (Sheep).